The following is a 96-amino-acid chain: Myticin-B (96 aa).

An N-terminal signal peptide occupies residues 1-20 (MKATMLLAVVVAVFVAGTEA). A propeptide spans 61–96 (VKFPFGATQDAKSMNELEYTPIMKSMENLDNGMDML) (removed in mature form).

Contains four disulfide bonds. As to expression, hemocytes.

It localises to the secreted. Its function is as follows. Bacteriolytic activity against Gram-positive bacteria M.luteus, B.megaterium and A.viridans and Gram-negative bacteria E.coli D31. Possesses antifungal activity against F.oxysporum. This is Myticin-B from Mytilus galloprovincialis (Mediterranean mussel).